Here is a 735-residue protein sequence, read N- to C-terminus: Serine/threonine-protein kinase BRSK2 (735 aa).

The region spanning 20-271 (YRLEKTLGKG…LEHIQKHIWY (252 aa)) is the Protein kinase domain. ATP contacts are provided by residues 26–34 (LGKGQTGLV) and lysine 49. Aspartate 142 functions as the Proton acceptor in the catalytic mechanism. The residue at position 175 (threonine 175) is a Phosphothreonine; by LKB1. Residue threonine 261 is modified to Phosphothreonine; by PKA. Serine 295 is modified (phosphoserine). One can recognise a UBA domain in the interval 298–340 (DIDPDVLDSMHSLGCFRDRNKLLQDLLSEEENQEKMIYFLLLD). Residues 346–367 (PSHEDEDLPPRNEIDPPRKRVD) show a composition bias toward basic and acidic residues. 3 disordered regions span residues 346–476 (PSHE…GVPW), 493–514 (FHRR…PESS), and 682–735 (KNGQ…REQP). Residues serine 368, serine 383, serine 394, serine 413, alanine 417, serine 424, and serine 428 each carry the phosphoserine modification. Residues 411–429 (SRSISGASSGLSTSPLSSP) show a composition bias toward low complexity. Over residues 432–446 (TPHPSPRGSPLPTPK) the composition is skewed to pro residues. Phosphoserine is present on serine 456. A phosphothreonine mark is found at threonine 460, threonine 464, and threonine 510. Residues serine 513 and serine 514 each carry the phosphoserine modification.

It belongs to the protein kinase superfamily. CAMK Ser/Thr protein kinase family. SNF1 subfamily. As to quaternary structure, interacts with FZR1, a regulatory subunit of the APC ubiquitin ligase complex. Interacts with COPS5. Interacts with PAK1. Mg(2+) is required as a cofactor. In terms of processing, may be phosphorylated at Thr-261 by PKA. Phosphorylated at Thr-175 by STK11/LKB1 in complex with STE20-related adapter-alpha (STRADA) pseudo kinase and CAB39. Not phosphorylated at Thr-175 by CaMKK2. In contrast, it is phosphorylated and activated by CaMKK1. May be inactivated via dephosphorylation of Thr-175 by PP2C. Post-translationally, polyubiquitinated by the APC complex in conjunction with FZR1, leading to its proteasomal degradation. Targeted for proteasomal degradation by interaction with COPS5. BRSK2 levels change during the cell cycle. BRSK2 levels are low at the G1/S boundary and gradually increase as cells progress into G2 phase. BRSK2 levels decrease rapidly at the end of mitosis.

The protein localises to the cytoplasm. It is found in the cytoskeleton. The protein resides in the microtubule organizing center. It localises to the centrosome. Its subcellular location is the perinuclear region. The protein localises to the endoplasmic reticulum. It carries out the reaction L-seryl-[protein] + ATP = O-phospho-L-seryl-[protein] + ADP + H(+). It catalyses the reaction L-threonyl-[protein] + ATP = O-phospho-L-threonyl-[protein] + ADP + H(+). The enzyme catalyses L-seryl-[tau protein] + ATP = O-phospho-L-seryl-[tau protein] + ADP + H(+). The catalysed reaction is L-threonyl-[tau protein] + ATP = O-phospho-L-threonyl-[tau protein] + ADP + H(+). Its activity is regulated as follows. Activated by phosphorylation on Thr-175 by STK11/LKB1. Serine/threonine-protein kinase that plays a key role in polarization of neurons and axonogenesis, cell cycle progress and insulin secretion. Phosphorylates CDK16, CDC25C, MAPT/TAU, PAK1 and WEE1. Following phosphorylation and activation by STK11/LKB1, acts as a key regulator of polarization of cortical neurons, probably by mediating phosphorylation of microtubule-associated proteins such as MAPT/TAU at 'Thr-523' and 'Ser-573'. Also regulates neuron polarization by mediating phosphorylation of WEE1 at 'Ser-642' in post-mitotic neurons, leading to down-regulate WEE1 activity in polarized neurons. Plays a role in the regulation of the mitotic cell cycle progress and the onset of mitosis. Plays a role in the regulation of insulin secretion in response to elevated glucose levels, probably via phosphorylation of CDK16 and PAK1. While BRSK2 phosphorylated at Thr-175 can inhibit insulin secretion, BRSK2 phosphorylated at Thr-261 can promote insulin secretion. Regulates reorganization of the actin cytoskeleton. May play a role in the apoptotic response triggered by endoplasmic reticulum (ER) stress. The sequence is that of Serine/threonine-protein kinase BRSK2 (Brsk2) from Rattus norvegicus (Rat).